Here is an 87-residue protein sequence, read N- to C-terminus: Alpha-elapitoxin-Ls2a (87 aa).

A signal peptide spans 1–21; sequence MKTLLLTLVVVTIVCLDLGYT. Disulfide bonds link Cys24–Cys41, Cys34–Cys62, Cys47–Cys51, Cys66–Cys77, and Cys78–Cys83.

The protein belongs to the three-finger toxin family. Long-chain subfamily. Type II alpha-neurotoxin sub-subfamily. In terms of tissue distribution, expressed by the venom gland.

It is found in the secreted. Its function is as follows. Binds with high affinity to muscular (tested on Torpedo marmorata, Kd=1.6 nM) and neuronal (chimeric alpha-7/CHRNA7, Kd=3 nM) nicotinic acetylcholine receptor (nAChR) and inhibits acetylcholine from binding to the receptor, thereby impairing neuromuscular and neuronal transmission. Also shows a very weak inhibition on GABA(A) receptors. The toxin (10 uM) inhibits 83% of current in channels composed of alpha-1-beta-3-gamma-2 (GABRA1-GABRB3-GABRG2) subunits, 39% of current in channels composed of alpha-2-beta-2-gamma-2 (GABRA2-GABRB2-GABRG2) subunits, and 33% of current in channels composed of alpha-5-beta-2-gamma-2 (GABRA5-GABRB2-GABRG2) subunits. This Laticauda semifasciata (Black-banded sea krait) protein is Alpha-elapitoxin-Ls2a.